The sequence spans 284 residues: Shikimate kinase (284 aa).

Position 85-95 (85-95) interacts with ATP; that stretch reads PLAAGLKSSSA.

It belongs to the GHMP kinase family. Archaeal shikimate kinase subfamily.

Its subcellular location is the cytoplasm. The enzyme catalyses shikimate + ATP = 3-phosphoshikimate + ADP + H(+). It functions in the pathway metabolic intermediate biosynthesis; chorismate biosynthesis; chorismate from D-erythrose 4-phosphate and phosphoenolpyruvate: step 5/7. This Halobacterium salinarum (strain ATCC 29341 / DSM 671 / R1) protein is Shikimate kinase.